The primary structure comprises 241 residues: GPI-anchored hemophore RBT5 (241 aa).

Residues 1 to 20 (MLALSLLSIVSIASAAGVTA) form the signal peptide. Residues 26-137 (NPYTIFPSVA…DALAKAADAA (112 aa)) form the CFEM domain. 4 disulfide bridges follow: C54–C94, C58–C89, C68–C75, and C77–C110. D72 provides a ligand contact to heme. Low complexity-rich tracts occupy residues 140 to 154 (TTAESTTAESTAAET) and 163 to 182 (KETTAAETSKAAESSAPAET). The segment at 140-210 (TTAESTTAES…SVAQSSSSAA (71 aa)) is disordered. The span at 183 to 199 (SKAEETSKAAETTKAEE) shows a compositional bias: basic and acidic residues. The segment covering 200–210 (SSVAQSSSSAA) has biased composition (low complexity). The GPI-anchor amidated asparagine moiety is linked to residue N221. Positions 222–241 (AGNMPAVAIGGVIAAVAALF) are cleaved as a propeptide — removed in mature form.

The protein belongs to the RBT5 family. In terms of assembly, interacts with PGA7. The GPI-anchor is attached to the protein in the endoplasmic reticulum and serves to target the protein to the cell surface. There, the glucosamine-inositol phospholipid moiety is cleaved off and the GPI-modified mannoprotein is covalently attached via its lipidless GPI glycan remnant to the 1,6-beta-glucan of the outer cell wall layer. Post-translationally, mannosylated.

It localises to the secreted. It is found in the cell wall. Its subcellular location is the cell membrane. In terms of biological role, GPI-linked hyphal surface heme-binding protein involved in heme-iron utilization. Heme transfer occurs between PGA7, RBT5 and CSA2 supporting a model in which the 3 CFEM proteins cooperate in a heme-acquisition system and form a cross-cell wall heme-transfer cascade. The ability to acquire iron from host tissues is a major virulence factor of pathogenic microorganisms. Required for biofilm formation. This is GPI-anchored hemophore RBT5 from Candida albicans (strain SC5314 / ATCC MYA-2876) (Yeast).